Here is a 208-residue protein sequence, read N- to C-terminus: Large ribosomal subunit protein uL4 (208 aa).

Residues 45–78 (RQGTAKSKERSEMSGSTRKLGRQKGSGGARRGDI) form a disordered region.

The protein belongs to the universal ribosomal protein uL4 family. As to quaternary structure, part of the 50S ribosomal subunit.

In terms of biological role, one of the primary rRNA binding proteins, this protein initially binds near the 5'-end of the 23S rRNA. It is important during the early stages of 50S assembly. It makes multiple contacts with different domains of the 23S rRNA in the assembled 50S subunit and ribosome. Functionally, forms part of the polypeptide exit tunnel. This Azobacteroides pseudotrichonymphae genomovar. CFP2 protein is Large ribosomal subunit protein uL4.